We begin with the raw amino-acid sequence, 390 residues long: Probable galacturonosyltransferase-like 9 (390 aa).

Over 1-10 (MRLRFPMKSA) the chain is Cytoplasmic. Residues 11-31 (VLAFAIFLVFIPLFSVGIRMI) traverse the membrane as a helical; Signal-anchor for type II membrane protein segment. The Lumenal segment spans residues 32 to 390 (PGRLTAVSAT…SELTEDSSFF (359 aa)). N-linked (GlcNAc...) asparagine glycans are attached at residues N205 and N223.

The protein belongs to the glycosyltransferase 8 family.

The protein localises to the golgi apparatus membrane. The protein operates within glycan metabolism; pectin biosynthesis. Its function is as follows. May be involved in pectin and/or xylans biosynthesis in cell walls. The polypeptide is Probable galacturonosyltransferase-like 9 (GATL9) (Arabidopsis thaliana (Mouse-ear cress)).